Reading from the N-terminus, the 87-residue chain is ADTVSGAALFKANCAQCHVGGGNLVNRAKTLKKEALEKYNMYSAKAIIAQVTHGKGAMPAFGIRLKAEQIENVAAYVLEQADNGWKK.

Residues cysteine 14, cysteine 17, histidine 18, and methionine 58 each coordinate heme c.

This sequence belongs to the cytochrome c family. PetJ subfamily. Monomer. In terms of processing, binds 1 heme c group covalently per subunit.

The protein resides in the cellular thylakoid lumen. In terms of biological role, functions as an electron carrier between membrane-bound cytochrome b6-f and photosystem I in oxygenic photosynthesis. The sequence is that of Cytochrome c6 (petJ) from Aphanizomenon flos-aquae.